We begin with the raw amino-acid sequence, 346 residues long: 2-oxoglutarate synthase subunit KorA (346 aa).

As to quaternary structure, heterotetramer of the KorA, KorB, KorC and KorD subunits.

The enzyme catalyses 2 oxidized [2Fe-2S]-[ferredoxin] + 2-oxoglutarate + CoA = succinyl-CoA + 2 reduced [2Fe-2S]-[ferredoxin] + CO2 + H(+). This chain is 2-oxoglutarate synthase subunit KorA (korA), found in Archaeoglobus fulgidus (strain ATCC 49558 / DSM 4304 / JCM 9628 / NBRC 100126 / VC-16).